The chain runs to 513 residues: MPYLLEMKNITKTFGSVKAIDNVSLRLNAGEIVSLCGENGSGKSTLMKVLCGIYPHGSYEGEIIFAGEEIQASHIRDTERKGIAIIHQELALVKELTVLENIFLGNEITHNGIMDYDLMTLRCQKLLAQVSLSISPDTRVGDLGLGQQQLVEIAKALNKQVRLLILDEPTASLTEQETSVLLDIIRDLQQHGIACIYISHKLNEVKAISDTICVIRDGQHIGTRDAAGMSEDDIITMMVGRELTALYPNEPHTTGDEILRIEHLTAWHPVNRHIKRVNDVSFSLKRGEILGIAGLVGAGRTETIQCLFGVWPGQWEGKIYIDGKQVDIRNCQQAIAQGIAMVPEDRKRDGIVPVMAVGKNITLAALKKFTGSISQLDDAAEQKCILESIQQLKVKTSSPDLAIGRLSGGNQQKAILARCLLLNPRILILDEPTRGIDIGAKYEIYKLINQLVQQGIAVIVISSELPEVLGLSDRVLVMHEGKLKANLINHNLTQEQVMEAALRSEHHVEKQSV.

2 consecutive ABC transporter domains span residues 5–242 and 259–505; these read LEMK…VGRE and LRIE…LRSE. Residue 37-44 participates in ATP binding; it reads GENGSGKS.

This sequence belongs to the ABC transporter superfamily. Xylose importer (TC 3.A.1.2.4) family. The complex is composed of two ATP-binding proteins (XylG), two transmembrane proteins (XylH) and a solute-binding protein (XylF).

It is found in the cell inner membrane. The enzyme catalyses D-xylose(out) + ATP + H2O = D-xylose(in) + ADP + phosphate + H(+). In terms of biological role, part of the ABC transporter complex XylFGH involved in xylose import. Responsible for energy coupling to the transport system. In Escherichia coli O6:K15:H31 (strain 536 / UPEC), this protein is Xylose import ATP-binding protein XylG.